The primary structure comprises 197 residues: UPF0301 protein Adeh_3962 (197 aa).

The protein belongs to the UPF0301 (AlgH) family.

The polypeptide is UPF0301 protein Adeh_3962 (Anaeromyxobacter dehalogenans (strain 2CP-C)).